A 150-amino-acid chain; its full sequence is Flagellar assembly factor FliW (150 aa).

This sequence belongs to the FliW family. Interacts with translational regulator CsrA and flagellin(s).

Its subcellular location is the cytoplasm. Acts as an anti-CsrA protein, binds CsrA and prevents it from repressing translation of its target genes, one of which is flagellin. Binds to flagellin and participates in the assembly of the flagellum. This is Flagellar assembly factor FliW from Leptospira borgpetersenii serovar Hardjo-bovis (strain JB197).